A 185-amino-acid polypeptide reads, in one-letter code: Ribosome-recycling factor (185 aa).

This sequence belongs to the RRF family.

Its subcellular location is the cytoplasm. Responsible for the release of ribosomes from messenger RNA at the termination of protein biosynthesis. May increase the efficiency of translation by recycling ribosomes from one round of translation to another. The sequence is that of Ribosome-recycling factor from Enterobacter sp. (strain 638).